The following is a 175-amino-acid chain: Protein FMP23, mitochondrial (175 aa).

A mitochondrion-targeting transit peptide spans 1-38 (MLINHLSKIRTVRHFSNIKPVLSKEVSRRVIVAPASHF).

It localises to the mitochondrion. May be involved in mitochondrial iron or copper homeostatis. The sequence is that of Protein FMP23, mitochondrial (FMP23) from Saccharomyces cerevisiae (strain ATCC 204508 / S288c) (Baker's yeast).